The sequence spans 440 residues: Xylose isomerase (440 aa).

Catalysis depends on residues histidine 101 and aspartate 104. Mg(2+) is bound by residues glutamate 232, glutamate 268, histidine 271, aspartate 296, aspartate 307, aspartate 309, and aspartate 339.

This sequence belongs to the xylose isomerase family. Homotetramer. The cofactor is Mg(2+).

The protein resides in the cytoplasm. It carries out the reaction alpha-D-xylose = alpha-D-xylulofuranose. The chain is Xylose isomerase from Escherichia coli (strain SMS-3-5 / SECEC).